A 353-amino-acid chain; its full sequence is Polycomb group RING finger protein 6 (353 aa).

The disordered stretch occupies residues 1–116 (MDEAETDATE…FSLRLESGRA (116 aa)). Basic and acidic residues predominate over residues 9 to 19 (TENKRASEAKR). A compositionally biased stretch (pro residues) spans 23-39 (MPPPPPPPPPISPPALI). Serine 34 is subject to Phosphoserine. Residues 40 to 52 (PAPAAGEEGPASL) show a composition bias toward low complexity. Over residues 69–82 (EPERSLGRLRGRFE) the composition is skewed to basic and acidic residues. Residues 71 to 112 (ERSLGRLRGRFEDYDEELEEEEEMEEEEEEEEEMSHFSLRLE) are a coiled coil. Acidic residues predominate over residues 83–103 (DYDEELEEEEEMEEEEEEEEE). At serine 118 the chain carries Phosphoserine. The RING-type zinc finger occupies 137–176 (CSICKGYLIDATTITECLHTFCKSCIVRHFYYSNRCPKCN). Glycyl lysine isopeptide (Lys-Gly) (interchain with G-Cter in SUMO2) cross-links involve residues lysine 226 and lysine 237.

As to quaternary structure, component of a PRC1-like complex. Interacts with BMI1/PCGF4, RING1 and RNF2. Interacts with KDM5D. Interacts with CBX4, CBX6, CBX7 and CBX8. In terms of processing, phosphorylated during mitosis. In terms of tissue distribution, expressed in ovary, testis, stomach, liver, thymus and kidney (at protein level).

Its subcellular location is the nucleus. In terms of biological role, transcriptional repressor. May modulate the levels of histone H3K4Me3 by activating KDM5D histone demethylase. Component of a Polycomb group (PcG) multiprotein PRC1-like complex, a complex class required to maintain the transcriptionally repressive state of many genes, including Hox genes, throughout development. PcG PRC1 complex acts via chromatin remodeling and modification of histones; it mediates monoubiquitination of histone H2A 'Lys-119', rendering chromatin heritably changed in its expressibility. Within the PRC1-like complex, regulates RNF2 ubiquitin ligase activity. This is Polycomb group RING finger protein 6 (Pcgf6) from Mus musculus (Mouse).